The primary structure comprises 281 residues: Nucleotide-binding protein CTN_0898 (281 aa).

An ATP-binding site is contributed by 9 to 16; that stretch reads GLSGAGKT. Residue 58–61 participates in GTP binding; sequence DVRS.

Belongs to the RapZ-like family.

Functionally, displays ATPase and GTPase activities. In Thermotoga neapolitana (strain ATCC 49049 / DSM 4359 / NBRC 107923 / NS-E), this protein is Nucleotide-binding protein CTN_0898.